A 156-amino-acid chain; its full sequence is ATP synthase subunit b (156 aa).

Residues 5 to 27 traverse the membrane as a helical segment; it reads ITLIGQMITFAIFVGFTMKFVWP.

This sequence belongs to the ATPase B chain family. F-type ATPases have 2 components, F(1) - the catalytic core - and F(0) - the membrane proton channel. F(1) has five subunits: alpha(3), beta(3), gamma(1), delta(1), epsilon(1). F(0) has three main subunits: a(1), b(2) and c(10-14). The alpha and beta chains form an alternating ring which encloses part of the gamma chain. F(1) is attached to F(0) by a central stalk formed by the gamma and epsilon chains, while a peripheral stalk is formed by the delta and b chains.

The protein resides in the cell inner membrane. F(1)F(0) ATP synthase produces ATP from ADP in the presence of a proton or sodium gradient. F-type ATPases consist of two structural domains, F(1) containing the extramembraneous catalytic core and F(0) containing the membrane proton channel, linked together by a central stalk and a peripheral stalk. During catalysis, ATP synthesis in the catalytic domain of F(1) is coupled via a rotary mechanism of the central stalk subunits to proton translocation. Its function is as follows. Component of the F(0) channel, it forms part of the peripheral stalk, linking F(1) to F(0). In Francisella philomiragia subsp. philomiragia (strain ATCC 25017 / CCUG 19701 / FSC 153 / O#319-036), this protein is ATP synthase subunit b.